The chain runs to 281 residues: Probable splicing factor, arginine/serine-rich 2 (281 aa).

The RRM 1 domain maps to Val-2–Arg-72. Composition is skewed to basic and acidic residues over residues Glu-78 to Glu-97 and Lys-168 to Arg-190. Disordered stretches follow at residues Glu-78–Phe-100 and Lys-168–Pro-281. The region spanning Phe-112–Arg-186 is the RRM 2 domain. Positions Ser-191–Ser-215 are enriched in basic residues. The segment covering Pro-216–Ser-225 has biased composition (basic and acidic residues). Positions Arg-245–Arg-254 are enriched in basic residues.

The protein belongs to the splicing factor SR family. Post-translationally, extensively phosphorylated on serine residues in the RS domain.

The protein resides in the nucleus. Functionally, plays a functionally redundant role in spermatogenesis and growth rate control. Required for the development of somatic gonad structures and for progression from larval stage to adulthood. The protein is Probable splicing factor, arginine/serine-rich 2 (rsp-2) of Caenorhabditis elegans.